Here is a 224-residue protein sequence, read N- to C-terminus: Ribonuclease T (224 aa).

Residues 1-11 (MSEDLYEDDQD) are compositionally biased toward acidic residues. The interval 1–20 (MSEDLYEDDQDSQVSSGSRH) is disordered. Residues 32 to 206 (VVVDVETGGF…YDTEKTAELF (175 aa)) form the Exonuclease domain. Residues aspartate 35, glutamate 37, histidine 193, and aspartate 198 each contribute to the Mg(2+) site. The active-site Proton donor/acceptor is histidine 193.

It belongs to the RNase T family. As to quaternary structure, homodimer. Requires Mg(2+) as cofactor.

Trims short 3' overhangs of a variety of RNA species, leaving a one or two nucleotide 3' overhang. Responsible for the end-turnover of tRNA: specifically removes the terminal AMP residue from uncharged tRNA (tRNA-C-C-A). Also appears to be involved in tRNA biosynthesis. This Pseudomonas entomophila (strain L48) protein is Ribonuclease T.